Consider the following 29-residue polypeptide: Trypsin inhibitor 1 (29 aa).

3 disulfide bridges follow: C3-C20, C10-C22, and C16-C28.

This sequence belongs to the protease inhibitor I7 (squash-type serine protease inhibitor) family.

It is found in the secreted. Functionally, inhibits trypsin. In Momordica repens, this protein is Trypsin inhibitor 1.